A 140-amino-acid chain; its full sequence is Calcitonin (140 aa).

Positions 1–25 (MGFWKFSPFLPLSILVLYQVGIIQA) are cleaved as a signal peptide. Residues 26 to 81 (APFRSALESLPDPAVLPEEESRLLLAALVKDYVQMKVRALEQEQETGGASLDSPRA) constitute a propeptide that is removed on maturation. The cysteines at positions 84 and 90 are disulfide-linked. Proline 115 is modified (proline amide). Positions 120 to 140 (VMARGLERDHGPHIGTSQDAY) are excised as a propeptide.

The protein belongs to the calcitonin family.

Its subcellular location is the secreted. Its function is as follows. Calcitonin is a peptide hormone that causes a rapid but short-lived drop in the level of calcium and phosphate in blood by promoting the incorporation of those ions in the bones. Calcitonin function is mediated by the calcitonin receptor/CALCR and the CALCR-RAMP2 (AMYR2) receptor complex. This Equus caballus (Horse) protein is Calcitonin (CALCA).